The sequence spans 278 residues: Large ribosomal subunit protein uL2 (278 aa).

Disordered stretches follow at residues 29-53 and 223-278; these read PEKS…TTRH and GVAM…GKKR. The span at 255–268 shows a compositional bias: basic and acidic residues; it reads GRTRRPGKESDKLI. Over residues 269 to 278 the composition is skewed to basic residues; it reads VRRRRTGKKR.

The protein belongs to the universal ribosomal protein uL2 family. In terms of assembly, part of the 50S ribosomal subunit. Forms a bridge to the 30S subunit in the 70S ribosome.

Functionally, one of the primary rRNA binding proteins. Required for association of the 30S and 50S subunits to form the 70S ribosome, for tRNA binding and peptide bond formation. It has been suggested to have peptidyltransferase activity; this is somewhat controversial. Makes several contacts with the 16S rRNA in the 70S ribosome. This chain is Large ribosomal subunit protein uL2, found in Kineococcus radiotolerans (strain ATCC BAA-149 / DSM 14245 / SRS30216).